The primary structure comprises 161 residues: SsrA-binding protein (161 aa).

The segment at 138–161 (DKRTDSKEKDWNRDKARIMKSSLR) is disordered. Residues 139–154 (KRTDSKEKDWNRDKAR) are compositionally biased toward basic and acidic residues.

Belongs to the SmpB family.

It is found in the cytoplasm. Its function is as follows. Required for rescue of stalled ribosomes mediated by trans-translation. Binds to transfer-messenger RNA (tmRNA), required for stable association of tmRNA with ribosomes. tmRNA and SmpB together mimic tRNA shape, replacing the anticodon stem-loop with SmpB. tmRNA is encoded by the ssrA gene; the 2 termini fold to resemble tRNA(Ala) and it encodes a 'tag peptide', a short internal open reading frame. During trans-translation Ala-aminoacylated tmRNA acts like a tRNA, entering the A-site of stalled ribosomes, displacing the stalled mRNA. The ribosome then switches to translate the ORF on the tmRNA; the nascent peptide is terminated with the 'tag peptide' encoded by the tmRNA and targeted for degradation. The ribosome is freed to recommence translation, which seems to be the essential function of trans-translation. The polypeptide is SsrA-binding protein (Aliivibrio fischeri (strain ATCC 700601 / ES114) (Vibrio fischeri)).